The primary structure comprises 376 residues: Light-dependent chlorophyll f synthase (376 aa).

The segment at 1–22 is disordered; it reads MKLESDHVIATSDSSDYTSEPT. The segment covering 11 to 22 has biased composition (polar residues); the sequence is TSDSSDYTSEPT. A run of 5 helical transmembrane segments spans residues 51-68, 140-155, 164-178, 219-240, and 298-312; these read YVGW…TAAT, HFLI…EWEL, WISL…ASVS, LHQL…HGSL, and FLAA…SAAL. An a chlorophyll-binding site is contributed by His140. A chlorophyll is bound at residue His220.

The protein belongs to the reaction center PufL/M/PsbA/D family. In terms of assembly, homodimer.

The protein localises to the cellular thylakoid membrane. In terms of biological role, synthesizes chlorophyll f or chlorophyllide f (Chl f, 2-formyl chlorophyll a), probably by oxidation of chlorophyll a or chlorophyllide a and reduction of plastoquinone. The reaction is probably light-dependent. Chl f absorbs far red light (FRL, 707 nm in 100% methanol), and is synthesized when cells are grown in FRL, where it provides the advantage of extending the spectral range of harvested light in terrestrial cyanobacteria. When ectopically expressed in Synechococcus PCC 7002 (which does not grow in FRL and does not make Chl f) produces Chl f (0.059% of total chlorophyll). The polypeptide is Light-dependent chlorophyll f synthase (Chlorogloeopsis fritschii (strain PCC 9212)).